The primary structure comprises 273 residues: 4-hydroxy-tetrahydrodipicolinate reductase (273 aa).

NAD(+)-binding positions include 12–17 and E38; that span reads GAGGRM. Position 39 (R39) interacts with NADP(+). NAD(+)-binding positions include 102–104 and 126–129; these read GTT and AANF. Residue H159 is the Proton donor/acceptor of the active site. (S)-2,3,4,5-tetrahydrodipicolinate is bound at residue H160. Catalysis depends on K163, which acts as the Proton donor. 169–170 lines the (S)-2,3,4,5-tetrahydrodipicolinate pocket; sequence GT.

The protein belongs to the DapB family. In terms of assembly, homotetramer.

The protein localises to the cytoplasm. The enzyme catalyses (S)-2,3,4,5-tetrahydrodipicolinate + NAD(+) + H2O = (2S,4S)-4-hydroxy-2,3,4,5-tetrahydrodipicolinate + NADH + H(+). The catalysed reaction is (S)-2,3,4,5-tetrahydrodipicolinate + NADP(+) + H2O = (2S,4S)-4-hydroxy-2,3,4,5-tetrahydrodipicolinate + NADPH + H(+). It functions in the pathway amino-acid biosynthesis; L-lysine biosynthesis via DAP pathway; (S)-tetrahydrodipicolinate from L-aspartate: step 4/4. Its function is as follows. Catalyzes the conversion of 4-hydroxy-tetrahydrodipicolinate (HTPA) to tetrahydrodipicolinate. This Salmonella typhimurium (strain LT2 / SGSC1412 / ATCC 700720) protein is 4-hydroxy-tetrahydrodipicolinate reductase.